The following is a 490-amino-acid chain: Transcriptional activator/repressor MOT3 (490 aa).

Methionine 1 is subject to N-acetylmethionine. Disordered stretches follow at residues 1–69, 101–162, and 214–267; these read MNAD…NKDD, NNNN…HPNQ, and NNGN…PQHH. Positions 8-36 are enriched in low complexity; sequence QQQQQQRQQHQQQQHQQQQHQHQHQQQQH. Polar residues predominate over residues 37–65; the sequence is TILQNVSNTNNIGSDSLASQPFNTTTVSS. The prion domain (PrD) stretch occupies residues 98–295; it reads NNSNNNNVTA…NLNLNINPAQ (198 aa). Composition is skewed to low complexity over residues 119-128, 138-157, 214-232, and 248-264; these read NNSNNSNNSN, NNST…NNNN, NNGN…HSAP, and THNN…NNAP. 2 consecutive C2H2-type zinc fingers follow at residues 346–368 and 374–397; these read HQCQ…LLSH and FLCP…KLKH. A compositionally biased stretch (low complexity) spans 421-436; the sequence is NNNNDNNNNNNSNSAS. Positions 421 to 458 are disordered; it reads NNNNDNNNNNNSNSASGSGGAGAAAAAATAPENEDGNG.

The protein resides in the nucleus. In terms of biological role, transcription factor that affects the expression of a large set of genes. Recognizes and binds to the consensus sequence 5'-[CAT]AGG[TC]A-3' in the promoter region. Plays a major role in the repression of a specific subset of hypoxic genes (e.g. ANB1, DAN1 and HEM13) under aerobic conditions. Acts synergistically with the transcription factor ROX1 to recruit the general repression complex SSN6-TUP1 to the promoter of hypoxic genes. Represses transcription of ergosterol biosynthetic genes. Negatively regulates pheromone-induced gene expression. Can act as a transcriptional activator (e.g. of genes like CYC1, SUC2 and the Ty long terminal repeat delta promoter). This chain is Transcriptional activator/repressor MOT3 (MOT3), found in Saccharomyces cerevisiae (strain ATCC 204508 / S288c) (Baker's yeast).